The chain runs to 501 residues: Xylulose kinase (501 aa).

Methionine 81 to histidine 82 is a binding site for substrate. Aspartate 239 serves as the catalytic Proton acceptor.

It belongs to the FGGY kinase family.

The enzyme catalyses D-xylulose + ATP = D-xylulose 5-phosphate + ADP + H(+). Functionally, catalyzes the phosphorylation of D-xylulose to D-xylulose 5-phosphate. This chain is Xylulose kinase, found in Lactococcus lactis subsp. lactis (strain IL1403) (Streptococcus lactis).